The following is a 230-amino-acid chain: MFPLVPLRSPPATEEQLLHQAQRVAGHTLGELAALAGLPIPQDLKRDKGWIGVLLELWLGASAGSKPEQDFAAMGVELKTIPVDSQGKPLETTFVCVAPLTGNTGVTWETSHVRHKLKRVLWIPIEGDRAIPLAERRVGAPLLWSPDEKEDRQLCQDWEELMDMIVLGHVERITARHGEVMQLRPKAANSKALTEAIGARGEPILTLPRGFYLKKNFTGALLARHFLLKT.

It belongs to the MutH family.

The protein localises to the cytoplasm. Its function is as follows. Sequence-specific endonuclease that cleaves unmethylated GATC sequences. It is involved in DNA mismatch repair. The polypeptide is DNA mismatch repair protein MutH (Enterobacter sp. (strain 638)).